Here is a 524-residue protein sequence, read N- to C-terminus: Coronin-2A (524 aa).

5 WD repeats span residues 80–120 (GHRG…LTRN), 130–170 (GHAR…SVIA), 178–217 (CHQD…VLQE), 220–263 (YKGH…VPLT), and 269–308 (GSSG…PHLT). Residues 403–436 (LLDSQTLPPERPLSNSMVQVSPQPLEPMKQPAED) form a disordered region. Polar residues predominate over residues 404-424 (LDSQTLPPERPLSNSMVQVSP). Residues 484–523 (QMFYRQQEEIRRLRELLIQREVQTKQLELEIKNLRMALGQ) are a coiled coil.

This sequence belongs to the WD repeat coronin family. Binds actin. Component of the N-Cor repressor complex, at least composed of NCOR1, NCOR2, HDAC3, TBL1X, TBL1R, CORO2A and GPS2.

This chain is Coronin-2A (Coro2a), found in Mus musculus (Mouse).